A 409-amino-acid polypeptide reads, in one-letter code: Elongation factor Tu, chloroplastic (409 aa).

In terms of domain architecture, tr-type G spans 10 to 214 (KPHVNIGTIG…AVDTYIPTPE (205 aa)). The tract at residues 19 to 26 (GHVDHGKT) is G1. Position 19-26 (19-26 (GHVDHGKT)) interacts with GTP. Residue T26 participates in Mg(2+) binding. Positions 60–64 (GITIN) are G2. The G3 stretch occupies residues 81 to 84 (DCPG). Residues 81-85 (DCPGH) and 136-139 (NKED) each bind GTP. The interval 136–139 (NKED) is G4. The segment at 174–176 (SAL) is G5.

Belongs to the TRAFAC class translation factor GTPase superfamily. Classic translation factor GTPase family. EF-Tu/EF-1A subfamily.

It is found in the plastid. It localises to the chloroplast. The enzyme catalyses GTP + H2O = GDP + phosphate + H(+). In terms of biological role, GTP hydrolase that promotes the GTP-dependent binding of aminoacyl-tRNA to the A-site of ribosomes during protein biosynthesis. In Pyropia yezoensis (Susabi-nori), this protein is Elongation factor Tu, chloroplastic (tufA).